Consider the following 490-residue polypeptide: Adenylyltransferase and sulfurtransferase uba4 (490 aa).

Residues 33-54 form a disordered region; that stretch reads EAAKTPPYSDSTETDRGSSSST. Residues G96, D117, 124-128, K141, and 185-186 contribute to the ATP site; these read SNLHR and DH. Zn(2+)-binding residues include C234 and C237. Residue C251 is the Glycyl thioester intermediate; for adenylyltransferase activity of the active site. Residues C323 and C326 each contribute to the Zn(2+) site. Residues 379–488 form the Rhodanese domain; the sequence is EHGKPVLLDV…WKREVDSTLP (110 aa). C443 acts as the Cysteine persulfide intermediate; for sulfurtransferase activity in catalysis.

It in the N-terminal section; belongs to the HesA/MoeB/ThiF family. UBA4 subfamily. Requires Zn(2+) as cofactor.

Its subcellular location is the cytoplasm. The protein resides in the cytosol. It catalyses the reaction [molybdopterin-synthase sulfur-carrier protein]-C-terminal Gly-Gly + ATP + H(+) = [molybdopterin-synthase sulfur-carrier protein]-C-terminal Gly-Gly-AMP + diphosphate. The enzyme catalyses [molybdopterin-synthase sulfur-carrier protein]-C-terminal Gly-Gly-AMP + S-sulfanyl-L-cysteinyl-[cysteine desulfurase] + AH2 = [molybdopterin-synthase sulfur-carrier protein]-C-terminal-Gly-aminoethanethioate + L-cysteinyl-[cysteine desulfurase] + A + AMP + 2 H(+). It participates in tRNA modification; 5-methoxycarbonylmethyl-2-thiouridine-tRNA biosynthesis. Functionally, plays a central role in 2-thiolation of mcm(5)S(2)U at tRNA wobble positions of cytosolic tRNA(Lys), tRNA(Glu) and tRNA(Gln). Also essential during biosynthesis of the molybdenum cofactor. Acts by mediating the C-terminal thiocarboxylation of sulfur carriers URM1 and MOCS2A. Its N-terminus first activates urm1 and MOCS2A as acyl-adenylates (-COAMP), then the persulfide sulfur on the catalytic cysteine is transferred to URM1 and MOCS2A to form thiocarboxylation (-COSH) of their C-terminus. The reaction probably involves hydrogen sulfide that is generated from the persulfide intermediate and that acts as a nucleophile towards URM1 and MOCS2A. Subsequently, a transient disulfide bond is formed. Does not use thiosulfate as sulfur donor; NFS1 probably acting as a sulfur donor for thiocarboxylation reactions. This is Adenylyltransferase and sulfurtransferase uba4 from Pyricularia oryzae (strain 70-15 / ATCC MYA-4617 / FGSC 8958) (Rice blast fungus).